A 324-amino-acid polypeptide reads, in one-letter code: Beta-ketoacyl-[acyl-carrier-protein] synthase III (324 aa).

Catalysis depends on residues C114 and H251. An ACP-binding region spans residues Q252 to R256. The active site involves N281.

It belongs to the thiolase-like superfamily. FabH family. As to quaternary structure, homodimer.

It is found in the cytoplasm. The catalysed reaction is malonyl-[ACP] + acetyl-CoA + H(+) = 3-oxobutanoyl-[ACP] + CO2 + CoA. Its pathway is lipid metabolism; fatty acid biosynthesis. Functionally, catalyzes the condensation reaction of fatty acid synthesis by the addition to an acyl acceptor of two carbons from malonyl-ACP. Catalyzes the first condensation reaction which initiates fatty acid synthesis and may therefore play a role in governing the total rate of fatty acid production. Possesses both acetoacetyl-ACP synthase and acetyl transacylase activities. Its substrate specificity determines the biosynthesis of branched-chain and/or straight-chain of fatty acids. The chain is Beta-ketoacyl-[acyl-carrier-protein] synthase III from Rhodobacter capsulatus (Rhodopseudomonas capsulata).